The sequence spans 345 residues: UDP-3-O-acylglucosamine N-acyltransferase (345 aa).

Residue histidine 239 is the Proton acceptor of the active site.

Belongs to the transferase hexapeptide repeat family. LpxD subfamily. As to quaternary structure, homotrimer.

It carries out the reaction a UDP-3-O-[(3R)-3-hydroxyacyl]-alpha-D-glucosamine + a (3R)-hydroxyacyl-[ACP] = a UDP-2-N,3-O-bis[(3R)-3-hydroxyacyl]-alpha-D-glucosamine + holo-[ACP] + H(+). Its pathway is bacterial outer membrane biogenesis; LPS lipid A biosynthesis. In terms of biological role, catalyzes the N-acylation of UDP-3-O-acylglucosamine using 3-hydroxyacyl-ACP as the acyl donor. Is involved in the biosynthesis of lipid A, a phosphorylated glycolipid that anchors the lipopolysaccharide to the outer membrane of the cell. The protein is UDP-3-O-acylglucosamine N-acyltransferase of Geobacter metallireducens (strain ATCC 53774 / DSM 7210 / GS-15).